Consider the following 170-residue polypeptide: Envelope protein 168 (170 aa).

Residue Met1 is a topological domain, intravirion. Residues 2–22 (FYPVVQILIGIILVIILILGF) traverse the membrane as a helical segment. At 23-170 (YHLKRKPPKK…TVMGIARNVL (148 aa)) the chain is on the virion surface side.

This sequence belongs to the asfivirus envelope protein p22 family.

It localises to the virion membrane. The protein localises to the host cell membrane. The chain is Envelope protein 168 from African swine fever virus (isolate Tick/South Africa/Pretoriuskop Pr4/1996) (ASFV).